The sequence spans 210 residues: 7-carboxy-7-deazaguanine synthase (210 aa).

Residues 12-14 and arginine 27 contribute to the substrate site; that span reads LQG. One can recognise a Radical SAM core domain in the interval 18 to 210; it reads NAGRPAVFCR…MQTHKYLNIP (193 aa). [4Fe-4S] cluster contacts are provided by cysteine 31, cysteine 46, and cysteine 49. Residue 48-50 participates in S-adenosyl-L-methionine binding; sequence FCD. A Mg(2+)-binding site is contributed by threonine 51. Threonine 90 contacts substrate. S-adenosyl-L-methionine is bound by residues glycine 92, 133-135, and 173-176; these read SPK and QPMD. Proline 210 lines the substrate pocket.

Belongs to the radical SAM superfamily. 7-carboxy-7-deazaguanine synthase family. In terms of assembly, homodimer. [4Fe-4S] cluster is required as a cofactor. Requires S-adenosyl-L-methionine as cofactor. It depends on Mg(2+) as a cofactor.

It carries out the reaction 6-carboxy-5,6,7,8-tetrahydropterin + H(+) = 7-carboxy-7-deazaguanine + NH4(+). Its pathway is purine metabolism; 7-cyano-7-deazaguanine biosynthesis. In terms of biological role, catalyzes the complex heterocyclic radical-mediated conversion of 6-carboxy-5,6,7,8-tetrahydropterin (CPH4) to 7-carboxy-7-deazaguanine (CDG), a step common to the biosynthetic pathways of all 7-deazapurine-containing compounds. In Burkholderia multivorans (strain ATCC 17616 / 249), this protein is 7-carboxy-7-deazaguanine synthase.